Reading from the N-terminus, the 322-residue chain is MKIGNYQLKNNLIVAPMAGVTDRPFRELCLRYGAGMAVSEMMSCNPALWKTAKSQNRMVHEGESGIRSVQIAGSDPQLMAEAAQFSVENGAQIIDINMGCPAKKVNKKLAGSALLRYPDVIEDILKAVVNAVNVPVTLKTRTGWDTDNKNCLSIAQLAEDCGIQALALHGRTRACMYKGEAEYDSIKAVKAAVSIPVIANGDIDSPEKARYVLEYTGADALMIGRPAQGRPWIFQEIQHFLEHGTTMPELPISEVKDIMLGHVTALHQFYGEYLGPRIARKHVSWYLQEHEQASAFRRTFNAIETADQQLDALEGYFDNVAS.

FMN-binding positions include 16-18 (PMA) and Q70. C100 serves as the catalytic Proton donor. FMN-binding positions include K139, 200 to 202 (NGD), and 224 to 225 (GR).

Belongs to the Dus family. DusB subfamily. FMN is required as a cofactor.

It catalyses the reaction a 5,6-dihydrouridine in tRNA + NAD(+) = a uridine in tRNA + NADH + H(+). The catalysed reaction is a 5,6-dihydrouridine in tRNA + NADP(+) = a uridine in tRNA + NADPH + H(+). Its function is as follows. Catalyzes the synthesis of 5,6-dihydrouridine (D), a modified base found in the D-loop of most tRNAs, via the reduction of the C5-C6 double bond in target uridines. This is tRNA-dihydrouridine synthase B from Vibrio cholerae serotype O1 (strain ATCC 39315 / El Tor Inaba N16961).